The chain runs to 351 residues: Methylthioribose-1-phosphate isomerase (351 aa).

Residues 51 to 53, Arg-94, and Gln-199 contribute to the substrate site; that span reads RGA. Asp-240 (proton donor) is an active-site residue. 250–251 lines the substrate pocket; the sequence is NK.

The protein belongs to the EIF-2B alpha/beta/delta subunits family. MtnA subfamily. As to quaternary structure, homodimer.

It carries out the reaction 5-(methylsulfanyl)-alpha-D-ribose 1-phosphate = 5-(methylsulfanyl)-D-ribulose 1-phosphate. The protein operates within amino-acid biosynthesis; L-methionine biosynthesis via salvage pathway; L-methionine from S-methyl-5-thio-alpha-D-ribose 1-phosphate: step 1/6. Its function is as follows. Catalyzes the interconversion of methylthioribose-1-phosphate (MTR-1-P) into methylthioribulose-1-phosphate (MTRu-1-P). This is Methylthioribose-1-phosphate isomerase from Bacillus cereus (strain ZK / E33L).